We begin with the raw amino-acid sequence, 42 residues long: MALVLKIFPYANAEIVTAAVTCIFMVLFGLSLGFALLKVQGE.

Residues 15–35 (IVTAAVTCIFMVLFGLSLGFA) traverse the membrane as a helical segment.

This sequence belongs to the PetM family. As to quaternary structure, the 4 large subunits of the cytochrome b6-f complex are cytochrome b6, subunit IV (17 kDa polypeptide, PetD), cytochrome f and the Rieske protein, while the 4 small subunits are PetG, PetL, PetM and PetN. The complex functions as a dimer.

It localises to the plastid. The protein resides in the chloroplast thylakoid membrane. Functionally, component of the cytochrome b6-f complex, which mediates electron transfer between photosystem II (PSII) and photosystem I (PSI), cyclic electron flow around PSI, and state transitions. In Trieres chinensis (Marine centric diatom), this protein is Cytochrome b6-f complex subunit 7.